The primary structure comprises 382 residues: Bestrophin-6 (382 aa).

4 helical membrane passes run 29 to 49, 68 to 88, 231 to 251, and 265 to 285; these read WKLIHRELFMWLVLYYTVLAI, FINFEPSILTFMLSFFVTTIV, LAYPQVIFFAVRLYFVICAFA, and VIHYYFPIVTVFQFICLMGWL.

It belongs to the anion channel-forming bestrophin (TC 1.A.46) family. Calcium-sensitive chloride channel subfamily.

The protein localises to the membrane. The chain is Bestrophin-6 (best-6) from Caenorhabditis elegans.